Here is a 440-residue protein sequence, read N- to C-terminus: Enolase (440 aa).

Position 168 (Gln-168) interacts with (2R)-2-phosphoglycerate. The active-site Proton donor is Glu-210. The Mg(2+) site is built by Asp-249, Glu-300, and Asp-326. (2R)-2-phosphoglycerate contacts are provided by Lys-351, Arg-380, Ser-381, and Lys-402. Lys-351 serves as the catalytic Proton acceptor.

Belongs to the enolase family. Mg(2+) is required as a cofactor.

The protein localises to the cytoplasm. It localises to the secreted. The protein resides in the cell surface. The catalysed reaction is (2R)-2-phosphoglycerate = phosphoenolpyruvate + H2O. Its pathway is carbohydrate degradation; glycolysis; pyruvate from D-glyceraldehyde 3-phosphate: step 4/5. Catalyzes the reversible conversion of 2-phosphoglycerate (2-PG) into phosphoenolpyruvate (PEP). It is essential for the degradation of carbohydrates via glycolysis. This chain is Enolase, found in Ureaplasma parvum serovar 3 (strain ATCC 27815 / 27 / NCTC 11736).